A 134-amino-acid polypeptide reads, in one-letter code: Replication enhancer protein (134 aa).

Belongs to the geminiviridae replication enhancer protein family. As to quaternary structure, homooligomer. Interacts with the replication-associated protein (REP). Interacts with host proliferating cell nuclear antigen (PCNA). Interacts with host retinoblastoma-related protein 1 (RBR1), and may thereby deregulate the host cell cycle. Oligomerization and interaction with PCNA are necessary for optimal replication enhancement.

Functionally, increases viral DNA accumulation. Enhances infectivity and symptom expression. This is Replication enhancer protein from Cynanchum acutum (Little mallow).